Reading from the N-terminus, the 261-residue chain is Flagellar L-ring protein (261 aa).

The N-terminal stretch at 1-15 is a signal peptide; sequence MKRLLCLLLLTTLTG. Residue Cys16 is the site of N-palmitoyl cysteine attachment. Cys16 carries S-diacylglycerol cysteine lipidation. Residues 121–133 show a composition bias toward basic and acidic residues; that stretch reads KSADAELSKKNDS. Residues 121–140 are disordered; sequence KSADAELSKKNDSSMDPLQV.

It belongs to the FlgH family. As to quaternary structure, the basal body constitutes a major portion of the flagellar organelle and consists of four rings (L,P,S, and M) mounted on a central rod.

It is found in the cell outer membrane. It localises to the bacterial flagellum basal body. In terms of biological role, assembles around the rod to form the L-ring and probably protects the motor/basal body from shearing forces during rotation. This is Flagellar L-ring protein from Aliivibrio salmonicida (strain LFI1238) (Vibrio salmonicida (strain LFI1238)).